The sequence spans 601 residues: Polypeptide N-acetylgalactosaminyltransferase 11 (601 aa).

The Cytoplasmic segment spans residues 1 to 7 (MGSAALR). The chain crosses the membrane as a helical; Signal-anchor for type II membrane protein span at residues 8 to 28 (CFCYGCLFTSVTWTLLLFIYF). 2 N-linked (GlcNAc...) asparagine glycosylation sites follow: N29 and N202. The Lumenal segment spans residues 29 to 601 (NFSEESQGFR…SPSQQWHLEN (573 aa)). Residues 143-254 (LPMASIVICF…EMWLQPLLAP (112 aa)) form a catalytic subdomain A region. A catalytic subdomain B region spans residues 312 to 374 (PFRSPTMAGG…PCSRVGHIFR (63 aa)). The 132-residue stretch at 469–600 (RPKILQRGRL…GSPSQQWHLE (132 aa)) folds into the Ricin B-type lectin domain. C486 and C505 form a disulfide bridge. The N-linked (GlcNAc...) asparagine glycan is linked to N508. Intrachain disulfides connect C529–C546 and C571–C589.

It belongs to the glycosyltransferase 2 family. GalNAc-T subfamily. Interacts with notch1. Mn(2+) serves as cofactor. The cofactor is Ca(2+).

Its subcellular location is the golgi apparatus membrane. It carries out the reaction L-seryl-[protein] + UDP-N-acetyl-alpha-D-galactosamine = a 3-O-[N-acetyl-alpha-D-galactosaminyl]-L-seryl-[protein] + UDP + H(+). It catalyses the reaction L-threonyl-[protein] + UDP-N-acetyl-alpha-D-galactosamine = a 3-O-[N-acetyl-alpha-D-galactosaminyl]-L-threonyl-[protein] + UDP + H(+). The protein operates within protein modification; protein glycosylation. Functionally, polypeptide N-acetylgalactosaminyltransferase that catalyzes the initiation of protein O-linked glycosylation and is involved in left/right asymmetry by mediating O-glycosylation of NOTCH1. O-glycosylation of NOTCH1 promotes activation of NOTCH1, modulating the balance between motile and immotile (sensory) cilia at the left-right organiser (LRO). Polypeptide N-acetylgalactosaminyltransferases catalyze the transfer of an N-acetyl-D-galactosamine residue to a serine or threonine residue on the protein receptor. This is Polypeptide N-acetylgalactosaminyltransferase 11 (galnt11) from Xenopus tropicalis (Western clawed frog).